The following is an 805-amino-acid chain: Phenylalanine--tRNA ligase beta subunit (805 aa).

The 117-residue stretch at 39 to 155 (VKVLGAFRIC…EDAPMGMRFI (117 aa)) folds into the tRNA-binding domain. The B5 domain maps to 408–479 (DTSRAYRFDP…RVASLTKLQG (72 aa)). Mg(2+)-binding residues include Asp-457, Asp-463, Glu-466, and Glu-467. Residues 707–804 (SDLQAVERDF…VAKATGATLR (98 aa)) form the FDX-ACB domain.

Belongs to the phenylalanyl-tRNA synthetase beta subunit family. Type 1 subfamily. As to quaternary structure, tetramer of two alpha and two beta subunits. It depends on Mg(2+) as a cofactor.

The protein localises to the cytoplasm. The catalysed reaction is tRNA(Phe) + L-phenylalanine + ATP = L-phenylalanyl-tRNA(Phe) + AMP + diphosphate + H(+). The sequence is that of Phenylalanine--tRNA ligase beta subunit from Cereibacter sphaeroides (strain ATCC 17023 / DSM 158 / JCM 6121 / CCUG 31486 / LMG 2827 / NBRC 12203 / NCIMB 8253 / ATH 2.4.1.) (Rhodobacter sphaeroides).